The chain runs to 479 residues: Glycogen synthase (479 aa).

Residue lysine 15 coordinates ADP-alpha-D-glucose.

It belongs to the glycosyltransferase 1 family. Bacterial/plant glycogen synthase subfamily.

The enzyme catalyses [(1-&gt;4)-alpha-D-glucosyl](n) + ADP-alpha-D-glucose = [(1-&gt;4)-alpha-D-glucosyl](n+1) + ADP + H(+). Its pathway is glycan biosynthesis; glycogen biosynthesis. Its function is as follows. Synthesizes alpha-1,4-glucan chains using ADP-glucose. The polypeptide is Glycogen synthase (Histophilus somni (strain 129Pt) (Haemophilus somnus)).